The primary structure comprises 542 residues: Membrane protein insertase YidC (542 aa).

The next 6 helical transmembrane spans lie at 6–26 (NILLIGLLFVSFLMWQQWQTD), 326–346 (LVVDYGFLWWLAIPIHWLLMF), 350–370 (FVGNWGVAIILITLTVRGGLY), 421–441 (GGCLPILLQMPIFIALYWVLL), 458–478 (LSVQDPYYVLPLLMGLSMFLM), and 501–521 (VIFTVFFLWFPAGLVLYWLVG).

This sequence belongs to the OXA1/ALB3/YidC family. Type 1 subfamily. In terms of assembly, interacts with the Sec translocase complex via SecD. Specifically interacts with transmembrane segments of nascent integral membrane proteins during membrane integration.

It localises to the cell inner membrane. Functionally, required for the insertion and/or proper folding and/or complex formation of integral membrane proteins into the membrane. Involved in integration of membrane proteins that insert both dependently and independently of the Sec translocase complex, as well as at least some lipoproteins. Aids folding of multispanning membrane proteins. The polypeptide is Membrane protein insertase YidC (Shewanella frigidimarina (strain NCIMB 400)).